The chain runs to 93 residues: Chromosomal protein MC1 (93 aa).

Positions 1-43 (SNTRNFVLRDEEGNEHGVFTGKQPRQAALKAANRGDGTKSNPD) are disordered.

Protects DNA against thermal denaturation and modulates transcription. In Methanosarcina barkeri, this protein is Chromosomal protein MC1.